A 31-amino-acid chain; its full sequence is Cytochrome b6-f complex subunit 6 (31 aa).

Residues 3-23 (ILISYFCFLLVFFLFTLILFI) traverse the membrane as a helical segment.

Belongs to the PetL family. The 4 large subunits of the cytochrome b6-f complex are cytochrome b6, subunit IV (17 kDa polypeptide, PetD), cytochrome f and the Rieske protein, while the 4 small subunits are PetG, PetL, PetM and PetN. The complex functions as a dimer.

It is found in the plastid. The protein resides in the chloroplast thylakoid membrane. Its function is as follows. Component of the cytochrome b6-f complex, which mediates electron transfer between photosystem II (PSII) and photosystem I (PSI), cyclic electron flow around PSI, and state transitions. PetL is important for photoautotrophic growth as well as for electron transfer efficiency and stability of the cytochrome b6-f complex. The protein is Cytochrome b6-f complex subunit 6 of Welwitschia mirabilis (Tree tumbo).